A 73-amino-acid chain; its full sequence is uncharacterized protein (73 aa).

The tract at residues 1 to 32 (MFLSSAVRKDSNGVRHLPSVQRWTPGSPPTRA) is disordered.

This is an uncharacterized protein from Frog virus 3 (isolate Goorha) (FV-3).